A 397-amino-acid polypeptide reads, in one-letter code: Elongation factor Tu (397 aa).

The tr-type G domain maps to 10 to 206 (KPHVNIGTIG…AVDSYIPTPE (197 aa)). A G1 region spans residues 19–26 (GHVDHGKT). Residue 19 to 26 (GHVDHGKT) participates in GTP binding. Thr-26 serves as a coordination point for Mg(2+). The G2 stretch occupies residues 60-64 (GITIN). The G3 stretch occupies residues 81 to 84 (DCPG). GTP is bound by residues 81 to 85 (DCPGH) and 136 to 139 (NKAD). A G4 region spans residues 136–139 (NKAD). Positions 174 to 176 (SAL) are G5.

The protein belongs to the TRAFAC class translation factor GTPase superfamily. Classic translation factor GTPase family. EF-Tu/EF-1A subfamily. Monomer.

It localises to the cytoplasm. The catalysed reaction is GTP + H2O = GDP + phosphate + H(+). Its function is as follows. GTP hydrolase that promotes the GTP-dependent binding of aminoacyl-tRNA to the A-site of ribosomes during protein biosynthesis. The chain is Elongation factor Tu from Clostridium perfringens (strain ATCC 13124 / DSM 756 / JCM 1290 / NCIMB 6125 / NCTC 8237 / Type A).